We begin with the raw amino-acid sequence, 98 residues long: MTERRRALSLAAVVDSINLACVVVSRDWLSLVPAFFYSPPPGGSFSGIKRESRRKRPSRNEIYGGGVLEQEVRMRRWSKTASPPVSLHHRPLGPARKP.

The N-terminal stretch at 1–19 (MTERRRALSLAAVVDSINL) is a signal peptide. The segment at 40 to 98 (PPGGSFSGIKRESRRKRPSRNEIYGGGVLEQEVRMRRWSKTASPPVSLHHRPLGPARKP) is disordered. The span at 87–98 (LHHRPLGPARKP) shows a compositional bias: basic residues.

This is an uncharacterized protein from Homo sapiens (Human).